The chain runs to 146 residues: Heat-stable 19 kDa antigen (146 aa).

Residues 1–20 form the signal peptide; the sequence is MKFSLLSAIAAAVFVPFTSA.

Belongs to the cerato-platanin family. Post-translationally, glycosylated.

It localises to the secreted. The sequence is that of Heat-stable 19 kDa antigen (CSA) from Coccidioides immitis (strain RS) (Valley fever fungus).